The sequence spans 192 residues: Akirin-1 (192 aa).

The segment at 17–71 (LLSPGSPKRRRCAPLPGPTPGLRPPDAEPPPPFQTQTPPQSLQQPAPPGSERRLP) is disordered. Phosphoserine is present on serine 22. The Nuclear localization signal motif lies at 23 to 28 (PKRRRC). Residues 31–49 (LPGPTPGLRPPDAEPPPPF) show a composition bias toward pro residues. Positions 50–60 (QTQTPPQSLQQ) are enriched in low complexity. Threonine 72 is modified (phosphothreonine). Residues 104–122 (ASESQPHSSALTAPSSPGS) are compositionally biased toward polar residues. Positions 104–127 (ASESQPHSSALTAPSSPGSSWMKK) are disordered. An SYVS motif motif is present at residues 189–192 (SYVS).

This sequence belongs to the akirin family. In terms of tissue distribution, widely expressed with the highest expression in heart, liver, placenta and peripheral blood leukocytes.

The protein resides in the nucleus. In terms of biological role, molecular adapter that acts as a bridge between proteins, and which is involved skeletal muscle development. Functions as a signal transducer for MSTN during skeletal muscle regeneration and myogenesis. May regulate chemotaxis of both macrophages and myoblasts by reorganising actin cytoskeleton, leading to more efficient lamellipodia formation via a PI3 kinase dependent pathway. In contrast to AKIRIN2, not involved in nuclear import of proteasomes. This is Akirin-1 from Homo sapiens (Human).